The sequence spans 1148 residues: Phospholipid-transporting ATPase IB (1148 aa).

Residues 1–54 (MSRATSVGDQLDVPARTIYLNQPHLNKFCDNQISTAKYSVVTFLPRFLYEQIRR) lie on the Cytoplasmic side of the membrane. T5 carries the post-translational modification Phosphothreonine. A helical transmembrane segment spans residues 55 to 75 (AANAFFLFIALLQQIPDVSPT). The Exoplasmic loop segment spans residues 76-79 (GRYT). The chain crosses the membrane as a helical span at residues 80 to 100 (TLVPLIIILTIAGIKEIVEDF). Topologically, residues 101 to 276 (KRHKADNAVN…SNVEKVTNVQ (176 aa)) are cytoplasmic. A helical transmembrane segment spans residues 277–297 (ILVLFGILLVMALVSSVGALY). Topologically, residues 298 to 324 (WNGSQGGKNWYIKKMDATSDNFGYNLL) are exoplasmic loop. The helical transmembrane segment at 325 to 345 (TFIILYNNLIPISLLVTLEVV) threads the bilayer. Residues 346-847 (KYTQALFINW…CILYCFYKNV (502 aa)) lie on the Cytoplasmic side of the membrane. The active-site 4-aspartylphosphate intermediate is D388. ATP is bound by residues D388, K389, T390, E488, F529, K552, R585, T665, G666, D667, R755, and K761. Position 388 (D388) interacts with Mg(2+). Residue T390 participates in Mg(2+) binding. D781 contacts Mg(2+). ATP is bound by residues N784 and D785. Position 785 (D785) interacts with Mg(2+). Residues 848-868 (VLYIIELWFAFVNGFSGQILF) traverse the membrane as a helical segment. Over 869–870 (ER) the chain is Exoplasmic loop. The helical transmembrane segment at 871-891 (WCIGLYNVIFTALPPFTLGIF) threads the bilayer. Topologically, residues 892–919 (ERSCSQESMLRFPQLYKITQNAEGFNTK) are cytoplasmic. Residues 920-940 (VFWGHCINALVHSLILFWFPM) form a helical membrane-spanning segment. Topologically, residues 941–957 (KALEHDTVLANGHATDY) are exoplasmic loop. Residues 958-978 (LFVGNIVYTYVVVTVCLKAGL) form a helical membrane-spanning segment. At 979–988 (ETTAWTKFSH) the chain is on the cytoplasmic side. Residues 989–1009 (LAVWGSMLIWLVFFGIYSTIW) form a helical membrane-spanning segment. Residues 1010 to 1023 (PTIPIAPDMKGQAT) lie on the Exoplasmic loop side of the membrane. A helical transmembrane segment spans residues 1024-1044 (MVLSSAHFWLGLFLVPTACLI). Topologically, residues 1045–1148 (EDVAWRAAKH…DTTKQKSRKK (104 aa)) are cytoplasmic. Residues 1102-1126 (PPTLFRGSSLQQSMPHGYAFSQEEH) are disordered.

This sequence belongs to the cation transport ATPase (P-type) (TC 3.A.3) family. Type IV subfamily. As to quaternary structure, component of a P4-ATPase flippase complex which consists of a catalytic alpha subunit and an accessory beta subunit. Interacts with TMEM30A to form a flippase complex. Requires Mg(2+) as cofactor. As to expression, expressed in retinal photoreceptor cells and testis.

It is found in the membrane. Its subcellular location is the golgi apparatus membrane. The protein resides in the endosome membrane. The protein localises to the cell membrane. It localises to the photoreceptor outer segment membrane. It is found in the photoreceptor inner segment membrane. It catalyses the reaction ATP + H2O + phospholipidSide 1 = ADP + phosphate + phospholipidSide 2.. The catalysed reaction is a 1,2-diacyl-sn-glycero-3-phospho-L-serine(out) + ATP + H2O = a 1,2-diacyl-sn-glycero-3-phospho-L-serine(in) + ADP + phosphate + H(+). It carries out the reaction a 1,2-diacyl-sn-glycero-3-phosphoethanolamine(in) + ATP + H2O = a 1,2-diacyl-sn-glycero-3-phosphoethanolamine(out) + ADP + phosphate + H(+). With respect to regulation, ATPase activity is stimulated by phosphatidylserine (PS) and minimally by phosphatidylethanolamine (PE). ATPase activity is inhibited by N-ethylmaleimide (NEM) and vanadate. Flippase activity is inhibited by NEM and 1,2-dioleoyl-sn-glycero-3-phospho-L-serine (DOPS). Catalytic component of a P4-ATPase flippase complex which catalyzes the hydrolysis of ATP coupled to the transport of aminophospholipids from the outer to the inner leaflet of various membranes and ensures the maintenance of asymmetric distribution of phospholipids. Able to translocate phosphatidylserine, but not phosphatidylcholine. Phospholipid translocation seems also to be implicated in vesicle formation and in uptake of lipid signaling molecules. Reconstituted to liposomes, the ATP8A2:TMEM30A flippase complex predominantly transports phosphatidylserine (PS) and to a lesser extent phosphatidylethanolamine (PE). Phospholipid translocation is not associated with a countertransport of an inorganic ion or other charged substrate from the cytoplasmic side toward the exoplasm in connection with the phosphorylation from ATP. ATP8A2:TMEM30A may be involved in regulation of neurite outgrowth. Proposed to function in the generation and maintenance of phospholipid asymmetry in photoreceptor disk membranes and neuronal axon membranes. May be involved in vesicle trafficking in neuronal cells. Required for normal visual and auditory function; involved in photoreceptor and inner ear spiral ganglion cell survival. The protein is Phospholipid-transporting ATPase IB of Bos taurus (Bovine).